The primary structure comprises 85 residues: UPF0386 protein Arad_1912 (85 aa).

Belongs to the UPF0386 family.

The protein is UPF0386 protein Arad_1912 of Rhizobium rhizogenes (strain K84 / ATCC BAA-868) (Agrobacterium radiobacter).